The sequence spans 342 residues: MASNSEKNPLLSDEKPKSTEENKSSKPESASGSSTSSAMPGLNFNAFDFSNMASILNDPSIREMAEQIAKDPAFNQLAEQLQRSIPNAGQEGGFPNFDPQQYVNTMQQVMHNPEFKTMAEKLGTALVQDPQMSPFLDAFSNPETAEHFTERMARMKEDPELKPILDEIDAGGPSAMMKYWNDPEVLKKLGEAMGMPVAGLPDQTVSAEPEVAEEGEEEESIVHQTASLGDVEGLKAALASGGNKDEEDSEGRTALHFACGYGELKCAQVLIDAGASVNAVDKNKNTPLHYAAGYGRKECVSLLLENGAAVTLQNLDEKTPIDVAKLNSQLEVVKLLEKDAFL.

The interval 1–41 (MASNSEKNPLLSDEKPKSTEENKSSKPESASGSSTSSAMPG) is disordered. Residues 12–26 (SDEKPKSTEENKSSK) show a composition bias toward basic and acidic residues. The span at 27 to 37 (PESASGSSTSS) shows a compositional bias: low complexity. 4 ANK repeats span residues 217–246 (EEES…NKDE), 250–279 (EGRT…SVNA), 283–312 (NKNT…AVTL), and 316–342 (DEKT…DAFL). Residues His223 and Glu246 each contribute to the a 1,2-diacyl-3-O-(beta-D-galactosyl)-sn-glycerol site. Tyr294 and Arg296 together coordinate a 1,2-diacyl-sn-glycero-3-phospho-(1'-sn-glycerol).

As to quaternary structure, interacts with TOM20-4, CYTB5-E, CBR1, APX3, APX5, TOC34 and GRF6. Binds to chloroplast outer envelope membrane (OEM) protein targeting signals, as well as to chloroplasts. Interacts with OEP7. Binds to HSP17.8 via its ankyrin repeats, this interaction enhances chaperone activity and chloroplast binding. Also interacts with HSP17.4A, HSP17.6A and HSP18.1. Binds specifically to two chloroplast glycolipids, monogalactosyldiacylglycerol (MGDG) and phosphatidylglycerol (PG). In terms of tissue distribution, ubiquitously expressed at basal level.

It is found in the cytoplasm. It localises to the nucleus. The protein localises to the plastid. The protein resides in the chloroplast outer membrane. Exhibits chaperone activity toward chloroplast outer envelope membrane, mitochondrion outer membrane, endoplasmic reticulum membrane and peroxisomal proteins, by recruiting specific proteins containing a single transmembrane associated with an AKR2A-binding sequence (ABS) and subsequently binding glycolipids (e.g. monogalactosyldiacylglycerol (MGDG) and phosphatidylglycerol (PG)) present in the membrane of the target organelle. Seems to be involved in the regulation of hydrogen peroxide levels during biotic and abiotic stresses by optimizing the ascorbate peroxidase 3 (APX3) hydrogen peroxide-degrading activity. This regulation might be monitored by GRF6. Cytosolic targeting factor for chloroplast outer membrane (COM) proteins that mediates sorting and targeting of nascent chloroplast outer envelope membrane (OEM) proteins to the chloroplast. Facilitates the targeting of OEP7 to chloroplasts. Facilitates the targeting of APX3 to peroxisomes. Involved in cellular metabolism (e.g. peroxisome activity) and required for plant growth and development. In Arabidopsis thaliana (Mouse-ear cress), this protein is Ankyrin repeat domain-containing protein 2A.